Reading from the N-terminus, the 191-residue chain is Putative acetyltransferase DDB_G0280825 (191 aa).

The protein belongs to the transferase hexapeptide repeat family.

This Dictyostelium discoideum (Social amoeba) protein is Putative acetyltransferase DDB_G0280825.